The chain runs to 134 residues: Small ribosomal subunit protein bS16 (134 aa).

Residues 80-134 (GLAKRPTRSNPTKGEPGKKAQERLAMAKQAEEEAAAKAAEAAAAAAAPAEEAASE) form a disordered region. Low complexity predominate over residues 115–134 (AKAAEAAAAAAAPAEEAASE).

It belongs to the bacterial ribosomal protein bS16 family.

In Brucella anthropi (strain ATCC 49188 / DSM 6882 / CCUG 24695 / JCM 21032 / LMG 3331 / NBRC 15819 / NCTC 12168 / Alc 37) (Ochrobactrum anthropi), this protein is Small ribosomal subunit protein bS16.